The following is a 424-amino-acid chain: MTLRPGTMRLACMFSSILLFGAAGLLLFISLQDPTELAPQQVPGIKFNIRPRQPHHDLPPGGSQDGDLKEPTERVTRDLSSGAPRGRNLPAPDQPQPPLQRGTRLRLRQRRRRLLIKKMPAAATIPANSSDAPFIRPGPGTLDGRWVSLHRSQQERKRVMQEACAKYRASSSRRAVTPRHVSRIFVEDRHRVLYCEVPKAGCSNWKRVLMVLAGLASSTADIQHNTVHYGSALKRLDTFDRQGILHRLSTYTKMLFVREPFERLVSAFRDKFEHPNSYYHPVFGKAILARYRANASREALRTGSGVRFPEFVQYLLDVHRPVGMDIHWDHVSRLCSPCLIDYDFVGKFESMEDDANFFLSLIRAPRNLTFPRFKDRHSQEARTTARIAHQYFAQLSALQRQRTYDFYYMDYLMFNYSKPFADLY.

Residues 1–10 (MTLRPGTMRL) are Cytoplasmic-facing. Residues 11–31 (ACMFSSILLFGAAGLLLFISL) form a helical; Signal-anchor for type II membrane protein membrane-spanning segment. The Lumenal portion of the chain corresponds to 32-424 (QDPTELAPQQ…NYSKPFADLY (393 aa)). The disordered stretch occupies residues 47–107 (FNIRPRQPHH…PLQRGTRLRL (61 aa)). Over residues 66 to 77 (GDLKEPTERVTR) the composition is skewed to basic and acidic residues. Residue Asn128 is glycosylated (N-linked (GlcNAc...) asparagine). Residues 198–204 (PKAGCSN) and 258–266 (REPFERLVS) each bind 3'-phosphoadenylyl sulfate. Residues Asn294, Asn367, and Asn415 are each glycosylated (N-linked (GlcNAc...) asparagine).

It belongs to the sulfotransferase 2 family. In terms of tissue distribution, predominantly expressed in pituitary gland. In brain, it is expressed in pituitary gland, cerebellum, medulla oblongata, pons, thalamus and spinal cord. Expressed in the epidermis. Expressed at lower level in lung, spleen, adrenal gland, placenta, prostate, testis, mammary gland and trachea.

The protein localises to the golgi apparatus membrane. Catalyzes the transfer of sulfate to position 4 of non-reducing N-acetylgalactosamine (GalNAc) residues in both N-glycans and O-glycans. Required for biosynthesis of glycoprotein hormones lutropin and thyrotropin, by mediating sulfation of their carbohydrate structures. Only active against terminal GalNAcbeta1,GalNAcbeta. Not active toward chondroitin. This chain is Carbohydrate sulfotransferase 8 (CHST8), found in Homo sapiens (Human).